A 223-amino-acid polypeptide reads, in one-letter code: Endonuclease NucS (223 aa).

It belongs to the NucS endonuclease family.

It is found in the cytoplasm. Its function is as follows. Cleaves both 3' and 5' ssDNA extremities of branched DNA structures. This Streptomyces coelicolor (strain ATCC BAA-471 / A3(2) / M145) protein is Endonuclease NucS.